Here is a 215-residue protein sequence, read N- to C-terminus: Glutathione S-transferase D6 (215 aa).

Residues 1–80 (MDLYNMSGSP…YLVEQYGKDD (80 aa)) form the GST N-terminal domain. Residues serine 9, 50 to 52 (HTI), and 64 to 66 (ETR) contribute to the glutathione site. The GST C-terminal domain maps to 86-206 (DPQKQALINQ…LARIQSAKKF (121 aa)).

The protein belongs to the GST superfamily. Delta family. As to quaternary structure, homodimer.

The catalysed reaction is RX + glutathione = an S-substituted glutathione + a halide anion + H(+). In terms of biological role, conjugation of reduced glutathione to a wide number of exogenous and endogenous hydrophobic electrophiles. May be involved in detoxification. The protein is Glutathione S-transferase D6 of Drosophila melanogaster (Fruit fly).